The primary structure comprises 264 residues: Vacuolar protein sorting-associated protein 75 (264 aa).

Ser3 carries the post-translational modification Phosphoserine. Residues 223–264 (LEDEEGESGLSADGDSEDDDGSLGEVDLPLSDEEPSSKKRKV) form a disordered region.

Belongs to the nucleosome assembly protein (NAP) family. Homodimer. Homotetramer. Forms a complex with RTT109; consisting of a VPS75 dimer contacted by two RTT109 subunits. Interacts with RTT109; the interaction is direct. Interacts with ASF1. Interacts with histone H3/H4 heterodimers and heterotetramers via histone H3.

It localises to the nucleus. In terms of biological role, histone chaperone which acts as a cofactor stimulating histone H3 acetylation by RTT109. Preferentially stimulates histone H3 'Lys-9' acetylation by RTT109. May also stimulate histone H3 'Lys-56' acetylation by RTT109. Assembles nucleosomes (in vitro). The chain is Vacuolar protein sorting-associated protein 75 (VPS75) from Saccharomyces cerevisiae (strain ATCC 204508 / S288c) (Baker's yeast).